A 321-amino-acid polypeptide reads, in one-letter code: L-carnitine dehydrogenase (321 aa).

Gly-14 to Gly-19 contacts NAD(+).

Belongs to the 3-hydroxyacyl-CoA dehydrogenase family. L-carnitine dehydrogenase subfamily. In terms of assembly, homodimer.

It localises to the cytoplasm. The catalysed reaction is carnitine + NAD(+) = 3-dehydrocarnitine + NADH + H(+). It participates in amine and polyamine metabolism; carnitine metabolism. Its function is as follows. Catalyzes the NAD(+)-dependent oxidation of L-carnitine to 3-dehydrocarnitine. This Pseudomonas putida (strain ATCC 47054 / DSM 6125 / CFBP 8728 / NCIMB 11950 / KT2440) protein is L-carnitine dehydrogenase.